A 214-amino-acid polypeptide reads, in one-letter code: Leucyl/phenylalanyl-tRNA--protein transferase (214 aa).

The interval 194–214 is disordered; that stretch reads FAPPGYSPDPASVVQRSSQTS.

This sequence belongs to the L/F-transferase family.

Its subcellular location is the cytoplasm. The enzyme catalyses N-terminal L-lysyl-[protein] + L-leucyl-tRNA(Leu) = N-terminal L-leucyl-L-lysyl-[protein] + tRNA(Leu) + H(+). The catalysed reaction is N-terminal L-arginyl-[protein] + L-leucyl-tRNA(Leu) = N-terminal L-leucyl-L-arginyl-[protein] + tRNA(Leu) + H(+). It catalyses the reaction L-phenylalanyl-tRNA(Phe) + an N-terminal L-alpha-aminoacyl-[protein] = an N-terminal L-phenylalanyl-L-alpha-aminoacyl-[protein] + tRNA(Phe). Functions in the N-end rule pathway of protein degradation where it conjugates Leu, Phe and, less efficiently, Met from aminoacyl-tRNAs to the N-termini of proteins containing an N-terminal arginine or lysine. In Cereibacter sphaeroides (strain ATCC 17025 / ATH 2.4.3) (Rhodobacter sphaeroides), this protein is Leucyl/phenylalanyl-tRNA--protein transferase.